A 1969-amino-acid chain; its full sequence is Echinoderm microtubule-associated protein-like 5 (1969 aa).

WD repeat units lie at residues 59–100 (GHSD…TISV), 104–145 (VHTH…MLSM), 148–187 (GHTDRIFDISWDLYQPNKLVSCGVKHIKFWSLCGNALTPK), 195–233 (GDLQTILCLACARDELTYSGALNGDIYVWKGINLIRTIQ), 235–273 (AHAAGIFSMNACEEGFATGGRDGCIRLWDLTFKPITVID), 280–321 (GYKG…LIMQ), 323–362 (HCEGELWALAVHPTKPLAVTGSDDRSVRIWSLVDHALIAR), 406–445 (DRKEAIHELKYSPDGTYLAVGCNDSSVDIYGVAQRYKKVG), 449–488 (GSLSFITHLDWSSDSRYLQTNDGNGKRLFYRMPGGKEVTS), and 561–601 (GHSA…KLKD). Residues 609-633 (ESLADSHSDESDSDLSDVPELDSEI) are disordered. The span at 619 to 633 (SDSDLSDVPELDSEI) shows a compositional bias: acidic residues. WD repeat units lie at residues 725–766 (GHDD…PLSI), 770–811 (HHQY…KLSI), 814–853 (GSKDKIFVVKMNPYVPDKLITAGIKHMKFWRKAGGGLIGR), 861–900 (GKNDTMMCAVYGWTEEMAFSGTSTGDVCIWRDIFLVKTVK), 901–940 (AHDGPVFSMHALEKGFVTGGKDGIVALWDDSFERCLKTYA), 996–1035 (HMEGEVWGLATHPYLPICATVSDDKTLRIWDLSPSHCMLA), 1038–1077 (KLKKGGRCCCFSPDGKALAVGLNDGSFLMANADTLEDLVS), 1080–1120 (HRKD…RVGI), and 1236–1276 (AHST…YREK). 2 disordered regions span residues 1274–1297 (REKRPCDSEESDIDSEEDGGYDSD) and 1326–1355 (QQKEPSIDERPPVSRAPPQPEKLQTNNVGK). Acidic residues predominate over residues 1281–1294 (SEESDIDSEEDGGY). Basic and acidic residues predominate over residues 1326–1337 (QQKEPSIDERPP). 10 WD repeats span residues 1412 to 1463 (EHND…TLSI), 1467 to 1508 (YHSK…KIAS), 1511 to 1550 (GHNQRIFVAEFRPDSDTQFVSVGVKHVKFWTLAGRALLSK), 1560 to 1598 (ARMQTMLAIAFGANNLTFTGTISGDVCVWKDHILCRIVA), 1600 to 1646 (AHNG…RAFR), 1691 to 1731 (GHVD…MLNK), 1733 to 1774 (NLGH…GKKR), 1775 to 1814 (DRRCAIHDIRFSPDSRYLAVGSSENSVDFYDLTLGPTLNR), 1887 to 1926 (AEKADVNCACVSHSGISLVTGDDFGMVKLFDFPCPEKFAK), and 1932 to 1969 (GHSPHVTNIRFTSGDRHVVSAGGDDCSLFVWKCVHTPH).

The protein belongs to the WD repeat EMAP family.

It is found in the cytoplasm. The protein resides in the cytoskeleton. May modify the assembly dynamics of microtubules, such that microtubules are slightly longer, but more dynamic. In Homo sapiens (Human), this protein is Echinoderm microtubule-associated protein-like 5 (EML5).